A 353-amino-acid polypeptide reads, in one-letter code: Transcription factor MafA (353 aa).

Ser-14 carries the post-translational modification Phosphoserine. Residue Lys-32 forms a Glycyl lysine isopeptide (Lys-Gly) (interchain with G-Cter in SUMO2) linkage. 2 disordered regions span residues 40-108 (RFCH…GGTS) and 177-219 (ADDM…GAGH). Over residues 46 to 73 (PPGSLSSTPLSTPCSSVPSSPSFCAPSP) the composition is skewed to low complexity. At Ser-49 the chain carries Phosphoserine. Thr-53 and Thr-57 each carry phosphothreonine. Phosphoserine is present on residues Ser-61 and Ser-65. Over residues 74–93 (GTGGGGGAGGGGGSSQAGGA) the composition is skewed to gly residues. The span at 183–210 (GHHHGAHHAAHHHHAAHHHHHHHHHHGG) shows a compositional bias: basic residues. Positions 254–279 (RLKQKRRTLKNRGYAQSCRFKRVQQR) are basic motif. The bZIP domain maps to 254–317 (RLKQKRRTLK…DLYKEKYEKL (64 aa)). Residues 282–303 (LESEKCQLQSQVEQLKLEVGRL) are leucine-zipper. The tract at residues 315 to 353 (EKLAGRGGPGSAGGAGFPREPSPPQAGPGGAKGTADFFL) is disordered. Gly residues predominate over residues 319–330 (GRGGPGSAGGAG).

It belongs to the bZIP family. Maf subfamily. Forms homodimers or heterodimers. Monomers and dimers are able to bind DNA, but the off-rate is faster for monomers. Interacts with NEUROD1 and PDX1. May interact with MAFB, FOS, JUN and PCAF. In terms of processing, ubiquitinated, leading to its degradation by the proteasome. Post-translationally, phosphorylated at tyrosines. Expressed in the islets of Langerhans (at protein level).

Its subcellular location is the nucleus. Functionally, transcription factor that activates insulin gene expression. Acts synergistically with NEUROD1/BETA2 and PDX1. Binds the insulin enhancer C1/RIPE3b element. Binds to consensus TRE-type MARE 5'-TGCTGACTCAGCA-3' DNA sequence. The polypeptide is Transcription factor MafA (MAFA) (Homo sapiens (Human)).